Here is a 316-residue protein sequence, read N- to C-terminus: Putative mannose-6-phosphate isomerase YvyI (316 aa).

Residues histidine 98, glutamate 116, and histidine 173 each contribute to the Zn(2+) site. Arginine 193 is a catalytic residue.

It belongs to the mannose-6-phosphate isomerase type 1 family. Requires Zn(2+) as cofactor.

It carries out the reaction D-mannose 6-phosphate = D-fructose 6-phosphate. The chain is Putative mannose-6-phosphate isomerase YvyI (yvyI) from Bacillus subtilis (strain 168).